Consider the following 283-residue polypeptide: Elongation factor Ts (283 aa).

Positions 79-82 (TDFV) are involved in Mg(2+) ion dislocation from EF-Tu.

This sequence belongs to the EF-Ts family.

The protein localises to the cytoplasm. Its function is as follows. Associates with the EF-Tu.GDP complex and induces the exchange of GDP to GTP. It remains bound to the aminoacyl-tRNA.EF-Tu.GTP complex up to the GTP hydrolysis stage on the ribosome. The sequence is that of Elongation factor Ts from Pseudoalteromonas translucida (strain TAC 125).